A 769-amino-acid chain; its full sequence is Integrin beta-8 (769 aa).

The N-terminal stretch at 1-42 (MCGSALAFFTAAFVCLQNDRRGPASFLWAAWVFSLVLGLGQG) is a signal peptide. Residues 43–684 (EDNRCASSNA…ECFSSPSYLR (642 aa)) are Extracellular-facing. The PSI domain occupies 46–95 (RCASSNAASCARCLALGPECGWCVQEDFISGGSRSERCDIVSNLISKGCS). 25 disulfide bridges follow: Cys47–Cys65, Cys55–Cys469, Cys58–Cys83, Cys68–Cys94, Cys211–Cys218, Cys266–Cys307, Cys407–Cys419, Cys439–Cys467, Cys471–Cys491, Cys471–Cys494, Cys481–Cys494, Cys499–Cys528, Cys511–Cys526, Cys520–Cys531, Cys533–Cys546, Cys553–Cys567, Cys561–Cys572, Cys574–Cys583, Cys585–Cys609, Cys593–Cys607, Cys601–Cys612, Cys614–Cys624, Cys627–Cys630, Cys634–Cys661, and Cys640–Cys657. Residues 146 to 384 (PVDLYYLVDV…NLVVEAYQKL (239 aa)) form the VWFA domain. Residues Asp154 and Ser156 each contribute to the Mg(2+) site. Position 193 (Asp193) interacts with Ca(2+). The N-linked (GlcNAc...) asparagine glycan is linked to Asn233. Ca(2+) is bound by residues Asn249, Asp251, Pro253, and Glu254. Mg(2+) is bound at residue Glu254. Residue Asn402 is glycosylated (N-linked (GlcNAc...) asparagine). N-linked (GlcNAc...) asparagine glycans are attached at residues Asn421, Asn431, Asn456, and Asn466. I-EGF domains lie at 471–495 (CEDNRGPKGKCVDETFLDSKCFQCD), 499–547 (CHFD…KYCE), 548–584 (KDDFSCPYHHGNLCAGHGECEAGRCQCFSGWEGDRCQ), and 585–625 (CPSA…RFCE). Asn648 is a glycosylation site (N-linked (GlcNAc...) asparagine). The helical transmembrane segment at 685–704 (IFFIIFIVTFLIGLLKVLII) threads the bilayer. The Cytoplasmic portion of the chain corresponds to 705–769 (RQVILQWNSN…NAHETFRCNF (65 aa)).

It belongs to the integrin beta chain family. As to quaternary structure, heterodimer of an alpha and a beta subunit. Beta-8 (ITGB8) associates with alpha-V (ITGAV) to form ITGAV:ITGB8. ITGAV:ITGB8 interacts with TGFB1. As to expression, placenta, kidney, brain, ovary, uterus and in several transformed cells. Transiently expressed in 293 human embryonic kidney cells.

Its subcellular location is the cell membrane. Functionally, integrin alpha-V:beta-8 (ITGAV:ITGB8) is a receptor for fibronectin. It recognizes the sequence R-G-D in its ligands. Integrin alpha-V:beta-6 (ITGAV:ITGB6) mediates R-G-D-dependent release of transforming growth factor beta-1 (TGF-beta-1) from regulatory Latency-associated peptide (LAP), thereby playing a key role in TGF-beta-1 activation on the surface of activated regulatory T-cells (Tregs). Required during vasculogenesis. This is Integrin beta-8 from Homo sapiens (Human).